The primary structure comprises 72 residues: Translation initiation factor IF-1 (72 aa).

In terms of domain architecture, S1-like spans 1–72; that stretch reads MSKEDVIEVE…TRGRITWRKK (72 aa).

It belongs to the IF-1 family. In terms of assembly, component of the 30S ribosomal translation pre-initiation complex which assembles on the 30S ribosome in the order IF-2 and IF-3, IF-1 and N-formylmethionyl-tRNA(fMet); mRNA recruitment can occur at any time during PIC assembly.

The protein resides in the cytoplasm. One of the essential components for the initiation of protein synthesis. Stabilizes the binding of IF-2 and IF-3 on the 30S subunit to which N-formylmethionyl-tRNA(fMet) subsequently binds. Helps modulate mRNA selection, yielding the 30S pre-initiation complex (PIC). Upon addition of the 50S ribosomal subunit IF-1, IF-2 and IF-3 are released leaving the mature 70S translation initiation complex. In Alkaliphilus metalliredigens (strain QYMF), this protein is Translation initiation factor IF-1.